The chain runs to 391 residues: MQLLFVHDFPVEKYKDNYYSIGFSHKIWNRYLTIFDKMLINSRVKNVDNGEIINKSNGEKVNFKTIDSYKSPKSLIFKHKKIFEALTISIKKSDGVLIRVPSVLGFIAALICKKINKPYMVEVVGAAFDAYWFHGSIFGKILSLPMEYLQKNAVKNASIAIYVTKKYLSNKYPCNGKEFKGISNVQSVEKFNKNLDIGNKIKIGLIGSTFVDYKGHNVAIKSISNLVNEGYNIELEFVGDGPSKKFMEMAKKYNVENNVIFKGKIYDKTALNNWFRNLDLYIQPSLTEGHCRAIVEAIGNGVPTLASNAGGNSDSVNKEYLFKPKDVVKLTKLINRSILSKQYREENVLENKKNISGYNLENIQIEREKALLNYKKIINDFYLAKGINKNA.

It functions in the pathway capsule biogenesis; capsule polysaccharide biosynthesis. Required for the biosynthesis of type 1 capsular polysaccharide. This chain is Protein CapJ (capJ), found in Staphylococcus aureus.